Reading from the N-terminus, the 93-residue chain is Pyrimidine/purine nucleoside phosphorylase (93 aa).

The protein belongs to the nucleoside phosphorylase PpnP family.

It carries out the reaction a purine D-ribonucleoside + phosphate = a purine nucleobase + alpha-D-ribose 1-phosphate. It catalyses the reaction adenosine + phosphate = alpha-D-ribose 1-phosphate + adenine. The enzyme catalyses cytidine + phosphate = cytosine + alpha-D-ribose 1-phosphate. The catalysed reaction is guanosine + phosphate = alpha-D-ribose 1-phosphate + guanine. It carries out the reaction inosine + phosphate = alpha-D-ribose 1-phosphate + hypoxanthine. It catalyses the reaction thymidine + phosphate = 2-deoxy-alpha-D-ribose 1-phosphate + thymine. The enzyme catalyses uridine + phosphate = alpha-D-ribose 1-phosphate + uracil. The catalysed reaction is xanthosine + phosphate = alpha-D-ribose 1-phosphate + xanthine. Its function is as follows. Catalyzes the phosphorolysis of diverse nucleosides, yielding D-ribose 1-phosphate and the respective free bases. Can use uridine, adenosine, guanosine, cytidine, thymidine, inosine and xanthosine as substrates. Also catalyzes the reverse reactions. The sequence is that of Pyrimidine/purine nucleoside phosphorylase from Marinobacter nauticus (strain ATCC 700491 / DSM 11845 / VT8) (Marinobacter aquaeolei).